The primary structure comprises 344 residues: N-acetyl-gamma-glutamyl-phosphate reductase (344 aa).

C150 is an active-site residue.

It belongs to the NAGSA dehydrogenase family. Type 1 subfamily.

It localises to the cytoplasm. It carries out the reaction N-acetyl-L-glutamate 5-semialdehyde + phosphate + NADP(+) = N-acetyl-L-glutamyl 5-phosphate + NADPH + H(+). It functions in the pathway amino-acid biosynthesis; L-arginine biosynthesis; N(2)-acetyl-L-ornithine from L-glutamate: step 3/4. Its function is as follows. Catalyzes the NADPH-dependent reduction of N-acetyl-5-glutamyl phosphate to yield N-acetyl-L-glutamate 5-semialdehyde. This chain is N-acetyl-gamma-glutamyl-phosphate reductase, found in Pseudomonas aeruginosa (strain UCBPP-PA14).